Here is a 281-residue protein sequence, read N- to C-terminus: ATP phosphoribosyltransferase (281 aa).

Belongs to the ATP phosphoribosyltransferase family. Long subfamily. It depends on Mg(2+) as a cofactor.

The protein localises to the cytoplasm. The enzyme catalyses 1-(5-phospho-beta-D-ribosyl)-ATP + diphosphate = 5-phospho-alpha-D-ribose 1-diphosphate + ATP. The protein operates within amino-acid biosynthesis; L-histidine biosynthesis; L-histidine from 5-phospho-alpha-D-ribose 1-diphosphate: step 1/9. Feedback inhibited by histidine. Functionally, catalyzes the condensation of ATP and 5-phosphoribose 1-diphosphate to form N'-(5'-phosphoribosyl)-ATP (PR-ATP). Has a crucial role in the pathway because the rate of histidine biosynthesis seems to be controlled primarily by regulation of HisG enzymatic activity. This is ATP phosphoribosyltransferase from Corynebacterium aurimucosum (strain ATCC 700975 / DSM 44827 / CIP 107346 / CN-1) (Corynebacterium nigricans).